Reading from the N-terminus, the 147-residue chain is Calcium-regulated heat-stable protein 1 (147 aa).

Pro residues predominate over residues 1 to 12 (MSSEPPPPPQPP). The segment at 1–52 (MSSEPPPPPQPPTHQASVGLLDTPRSRERSPSPLRGNVVPSPLPTRRTRTFS) is disordered. S2 is modified (N-acetylserine). 3 positions are modified to phosphoserine: S30, S32, and S41. T45 bears the Phosphothreonine mark. Phosphoserine is present on residues S52 and S58. The CSD domain occupies 62–129 (VYKGVCKCFC…KLQAVEVVIT (68 aa)). Phosphoserine is present on residues S146 and S147.

Homodimer. Interacts with STYX. Dephosphorylated by calcineurin in a Ca(2+) dependent manner. Can be phosphorylated by DYRK2 (in vitro).

It is found in the cytoplasm. It localises to the P-body. The protein localises to the cytoplasmic granule. Its function is as follows. Binds mRNA and regulates the stability of target mRNA. Binds single-stranded DNA (in vitro). The sequence is that of Calcium-regulated heat-stable protein 1 (CARHSP1) from Homo sapiens (Human).